Here is a 276-residue protein sequence, read N- to C-terminus: Elongation factor Ts (276 aa).

The interval 80–83 (TDFV) is involved in Mg(2+) ion dislocation from EF-Tu.

This sequence belongs to the EF-Ts family.

The protein localises to the cytoplasm. Functionally, associates with the EF-Tu.GDP complex and induces the exchange of GDP to GTP. It remains bound to the aminoacyl-tRNA.EF-Tu.GTP complex up to the GTP hydrolysis stage on the ribosome. In Acidothermus cellulolyticus (strain ATCC 43068 / DSM 8971 / 11B), this protein is Elongation factor Ts.